Reading from the N-terminus, the 1333-residue chain is Aldehyde oxidase 1 (1333 aa).

In terms of domain architecture, 2Fe-2S ferredoxin-type spans 4-91 (PQLLFYVNGQ…GTAVTTVEGI (88 aa)). Positions 43, 48, 51, and 73 each coordinate [2Fe-2S] cluster. Residue Gln-112 participates in Mo-molybdopterin binding. Residues Cys-113, Cys-116, Cys-148, and Cys-150 each contribute to the [2Fe-2S] cluster site. Cys-150 serves as a coordination point for Mo-molybdopterin. One can recognise an FAD-binding PCMH-type domain in the interval 235 to 420 (FYSNRMTWIS…VSVNIPCSRK (186 aa)). FAD-binding positions include 263 to 270 (IVMGYTSV), Ala-344, Ser-353, His-357, Asp-366, and Leu-410. Residues 801 to 802 (AF) and Met-1042 each bind Mo-molybdopterin. Position 1063 is a phosphoserine (Ser-1063). Residues 1083 to 1086 (GSVV), Gln-1198, and Leu-1263 each bind Mo-molybdopterin. Residue Glu-1265 is the Proton acceptor; for azaheterocycle hydroxylase activity of the active site.

This sequence belongs to the xanthine dehydrogenase family. As to quaternary structure, homodimer. It depends on [2Fe-2S] cluster as a cofactor. The cofactor is FAD. Mo-molybdopterin is required as a cofactor. Post-translationally, the N-terminus is blocked. As to expression, expression in liver (at protein level). Also detected in heart, lung, spleen and kidney.

It is found in the cytoplasm. It catalyses the reaction an aldehyde + O2 + H2O = a carboxylate + H2O2 + H(+). The enzyme catalyses retinal + O2 + H2O = retinoate + H2O2 + H(+). Its activity is regulated as follows. Inhibited by menadione and isovanillin. Not inhibited by allopurinol, a xanthine dehydrogenase potent inhibitor. Inhibited by the flavonoids quercetin, myricetin and genistein. Nitric oxide generation is inhibited by raloxifene and competitively inhibited by an increase in oxygen levels. Its function is as follows. Oxidase with broad substrate specificity, oxidizing aromatic azaheterocycles, such as N1-methylnicotinamide, N-methylphthalazinium and phthalazine, as well as aldehydes, such as benzaldehyde, retinal, pyridoxal, and vanillin. Plays a role in the metabolism of xenobiotics and drugs containing aromatic azaheterocyclic substituents. Participates in the bioactivation of prodrugs such as famciclovir, catalyzing the oxidation step from 6-deoxypenciclovir to penciclovir, which is a potent antiviral agent. Is probably involved in the regulation of reactive oxygen species homeostasis. Is a prominent source of superoxide generation via the one-electron reduction of molecular oxygen. Also catalyzes nitric oxide (NO) production; under anaerobic conditions, reduces nitrite to NO with NADH or aldehyde as electron donor, but under aerobic conditions, NADH is the preferred substrate. These reactions may be catalyzed by several isozymes. May play a role in adipogenesis. The chain is Aldehyde oxidase 1 from Rattus norvegicus (Rat).